A 347-amino-acid chain; its full sequence is Elongation factor Ts (347 aa).

The tract at residues 80-83 (TDFV) is involved in Mg(2+) ion dislocation from EF-Tu.

The protein belongs to the EF-Ts family.

The protein resides in the cytoplasm. In terms of biological role, associates with the EF-Tu.GDP complex and induces the exchange of GDP to GTP. It remains bound to the aminoacyl-tRNA.EF-Tu.GTP complex up to the GTP hydrolysis stage on the ribosome. This is Elongation factor Ts from Streptococcus sanguinis (strain SK36).